Here is a 275-residue protein sequence, read N- to C-terminus: 3-methyl-2-oxobutanoate hydroxymethyltransferase (275 aa).

The Mg(2+) site is built by D44 and D83. 3-methyl-2-oxobutanoate is bound by residues 44-45 (DS), D83, and K113. E115 lines the Mg(2+) pocket. The active-site Proton acceptor is E182.

The protein belongs to the PanB family. In terms of assembly, homodecamer; pentamer of dimers. It depends on Mg(2+) as a cofactor.

It is found in the cytoplasm. The enzyme catalyses 3-methyl-2-oxobutanoate + (6R)-5,10-methylene-5,6,7,8-tetrahydrofolate + H2O = 2-dehydropantoate + (6S)-5,6,7,8-tetrahydrofolate. The protein operates within cofactor biosynthesis; (R)-pantothenate biosynthesis; (R)-pantoate from 3-methyl-2-oxobutanoate: step 1/2. Catalyzes the reversible reaction in which hydroxymethyl group from 5,10-methylenetetrahydrofolate is transferred onto alpha-ketoisovalerate to form ketopantoate. This is 3-methyl-2-oxobutanoate hydroxymethyltransferase from Clostridium novyi (strain NT).